The chain runs to 363 residues: NAD(P)H-quinone oxidoreductase subunit 1, chloroplastic (363 aa).

A run of 6 helical transmembrane segments spans residues 30 to 50 (LVPIFTPVLGITIGVLAIVWL), 98 to 118 (FSIGPSIAVISILLSYLIIPF), 129 to 149 (IGVFLWIAISSIAPIGLLMSG), 248 to 268 (YSGIKFGLFYVASYLNLLVSS), 300 to 320 (VFGTTIGIFITLAKTYLFLFI), and 336 to 356 (LLNLGWKFLLPISLGNLLLTT).

Belongs to the complex I subunit 1 family. As to quaternary structure, NDH is composed of at least 16 different subunits, 5 of which are encoded in the nucleus.

Its subcellular location is the plastid. It localises to the chloroplast thylakoid membrane. The catalysed reaction is a plastoquinone + NADH + (n+1) H(+)(in) = a plastoquinol + NAD(+) + n H(+)(out). The enzyme catalyses a plastoquinone + NADPH + (n+1) H(+)(in) = a plastoquinol + NADP(+) + n H(+)(out). Its function is as follows. NDH shuttles electrons from NAD(P)H:plastoquinone, via FMN and iron-sulfur (Fe-S) centers, to quinones in the photosynthetic chain and possibly in a chloroplast respiratory chain. The immediate electron acceptor for the enzyme in this species is believed to be plastoquinone. Couples the redox reaction to proton translocation, and thus conserves the redox energy in a proton gradient. The polypeptide is NAD(P)H-quinone oxidoreductase subunit 1, chloroplastic (Vitis vinifera (Grape)).